The sequence spans 69 residues: Rubredoxin-1 (69 aa).

In terms of domain architecture, Rubredoxin-like spans 14–69 (QASWMCAECGYIYDPAEGNLETNIRPGMPFDKLPDDWSCPVCNHPKNQFTKFISQL). Fe cation is bound by residues cysteine 19, cysteine 22, cysteine 52, and cysteine 55.

This sequence belongs to the rubredoxin family. In terms of assembly, monomer. The cofactor is Fe(3+).

In terms of biological role, serves as an electron acceptor for pyruvate ferredoxin oxidoreductase (PFOR). The polypeptide is Rubredoxin-1 (rub1) (Chlorobaculum tepidum (strain ATCC 49652 / DSM 12025 / NBRC 103806 / TLS) (Chlorobium tepidum)).